The primary structure comprises 204 residues: Small ribosomal subunit protein uS4 (204 aa).

The 64-residue stretch at 93–156 (SRLSSVLYHS…AKIPVIVEAV (64 aa)) folds into the S4 RNA-binding domain.

It belongs to the universal ribosomal protein uS4 family. As to quaternary structure, part of the 30S ribosomal subunit. Contacts protein S5. The interaction surface between S4 and S5 is involved in control of translational fidelity.

Functionally, one of the primary rRNA binding proteins, it binds directly to 16S rRNA where it nucleates assembly of the body of the 30S subunit. In terms of biological role, with S5 and S12 plays an important role in translational accuracy. This Wolbachia sp. subsp. Brugia malayi (strain TRS) protein is Small ribosomal subunit protein uS4.